A 376-amino-acid polypeptide reads, in one-letter code: PqqA peptide cyclase (376 aa).

In terms of domain architecture, Radical SAM core spans 4 to 219 (VPPPLSVLLE…VETARRSLGD (216 aa)). [4Fe-4S] cluster is bound by residues cysteine 18, cysteine 22, and cysteine 25.

Belongs to the radical SAM superfamily. PqqE family. Interacts with PqqD. The interaction is necessary for activity of PqqE. [4Fe-4S] cluster is required as a cofactor.

It carries out the reaction [PQQ precursor protein] + S-adenosyl-L-methionine = E-Y cross-linked-[PQQ precursor protein] + 5'-deoxyadenosine + L-methionine + H(+). It participates in cofactor biosynthesis; pyrroloquinoline quinone biosynthesis. In terms of biological role, catalyzes the cross-linking of a glutamate residue and a tyrosine residue in the PqqA protein as part of the biosynthesis of pyrroloquinoline quinone (PQQ). The protein is PqqA peptide cyclase of Xanthomonas campestris pv. campestris (strain 8004).